The sequence spans 188 residues: Protein GrpE 2 (188 aa).

The segment covering 1–29 has biased composition (basic and acidic residues); the sequence is MDNQEKKTNYQNTDKENDLEKNKEKKNDE. The interval 1–33 is disordered; sequence MDNQEKKTNYQNTDKENDLEKNKEKKNDESIFQ.

It belongs to the GrpE family. Homodimer.

The protein localises to the cytoplasm. In terms of biological role, participates actively in the response to hyperosmotic and heat shock by preventing the aggregation of stress-denatured proteins, in association with DnaK and GrpE. It is the nucleotide exchange factor for DnaK and may function as a thermosensor. Unfolded proteins bind initially to DnaJ; upon interaction with the DnaJ-bound protein, DnaK hydrolyzes its bound ATP, resulting in the formation of a stable complex. GrpE releases ADP from DnaK; ATP binding to DnaK triggers the release of the substrate protein, thus completing the reaction cycle. Several rounds of ATP-dependent interactions between DnaJ, DnaK and GrpE are required for fully efficient folding. The chain is Protein GrpE 2 from Buchnera aphidicola subsp. Schizaphis graminum (strain Sg).